Reading from the N-terminus, the 630-residue chain is tRNA uridine 5-carboxymethylaminomethyl modification enzyme MnmG (630 aa).

An FAD-binding site is contributed by 13–18; it reads GGGHAG. NAD(+) is bound at residue 273–287; it reads GPRYCPSIEDKIHRF.

This sequence belongs to the MnmG family. As to quaternary structure, homodimer. Heterotetramer of two MnmE and two MnmG subunits. It depends on FAD as a cofactor.

It localises to the cytoplasm. Functionally, NAD-binding protein involved in the addition of a carboxymethylaminomethyl (cmnm) group at the wobble position (U34) of certain tRNAs, forming tRNA-cmnm(5)s(2)U34. In Pseudomonas entomophila (strain L48), this protein is tRNA uridine 5-carboxymethylaminomethyl modification enzyme MnmG.